Consider the following 295-residue polypeptide: Ribosomal RNA small subunit methyltransferase A (295 aa).

Residues asparagine 29, leucine 31, glycine 56, glutamate 77, aspartate 102, and asparagine 128 each contribute to the S-adenosyl-L-methionine site.

It belongs to the class I-like SAM-binding methyltransferase superfamily. rRNA adenine N(6)-methyltransferase family. RsmA subfamily.

The protein resides in the cytoplasm. It carries out the reaction adenosine(1518)/adenosine(1519) in 16S rRNA + 4 S-adenosyl-L-methionine = N(6)-dimethyladenosine(1518)/N(6)-dimethyladenosine(1519) in 16S rRNA + 4 S-adenosyl-L-homocysteine + 4 H(+). Its function is as follows. Specifically dimethylates two adjacent adenosines (A1518 and A1519) in the loop of a conserved hairpin near the 3'-end of 16S rRNA in the 30S particle. May play a critical role in biogenesis of 30S subunits. This chain is Ribosomal RNA small subunit methyltransferase A, found in Listeria monocytogenes serotype 4b (strain CLIP80459).